A 553-amino-acid chain; its full sequence is Effector protein HopAB2 (553 aa).

Disordered stretches follow at residues 1–123 (MAGI…APRR), 198–227 (AVHQQAASAPVRSPTPTPASPAASSSGSSQ), and 239–275 (APNQGRSSNTAASQTPVDRSPPRVNQRPIRVDRAAMR). The interval 1–308 (MAGINRAGPS…LRTALERHVM (308 aa)) is host recognition; Pto interaction. Residues 24–39 (SGQAHGSGSGASSSNS) show a composition bias toward low complexity. The segment covering 47–60 (SNTPPSNAPAPPPT) has biased composition (pro residues). A compositionally biased stretch (low complexity) spans 217 to 227 (SPAASSSGSSQ). The span at 242–255 (QGRSSNTAASQTPV) shows a compositional bias: polar residues. The E3 ubiquitin-protein ligase stretch occupies residues 309-553 (QRLPIPLDIG…IAKYAFRIVP (245 aa)). Residues 325–328 (GINP) carry the Interaction with Pto-kinase motif. The interval 361-380 (APRPAVPVAPATASRRPDGT) is disordered. The required for E3 ubiquitin-protein ligase and anti-PCD activities and pathogenesis stretch occupies residues 512 to 529 (KDLAFMDMKKLAQFLAGK).

This sequence belongs to the HopAB family. In terms of assembly, interacts physically with plant cell Pto. In terms of processing, auto-ubiquitinated.

It localises to the secreted. Its function is as follows. Effector protein involved in gene-for-gene resistance in tomato plants. It is recognized by the host Pto resistance protein and elicits Pto and Prf-dependent hypersensitive response (HR) and programmed cell death (PCD), resulting in host immunity. In susceptible plants, acts as a virulence factor by suppressing PCD and HR-based plant immunity. This function requires its E3 ubiquitin ligase activity probably by recruiting E2 enzymes and transferring ubiquitin molecules to cellular proteins involved in regulation of PCD and targeting them for degradation. Also, induces expression of host genes involved in ethylene biosynthesis and signaling, in particular ACO1 and ACO2, encoding the ethylene-forming enzyme ACC oxidase. The sequence is that of Effector protein HopAB2 (hopAB2) from Pseudomonas syringae pv. tomato (strain ATCC BAA-871 / DC3000).